The primary structure comprises 1070 residues: Carbamoyl phosphate synthase large chain (1070 aa).

Residues 1 to 401 (MPKRDDIKTI…ALLKAVRSLE (401 aa)) form a carboxyphosphate synthetic domain region. ATP contacts are provided by Arg129, Arg169, Gly175, Gly176, Lys208, Ile210, Glu215, Gly241, Ile242, His243, Gln284, and Glu298. Residues 133-327 (RDLMNELGEP…IAKLAAKIAV (195 aa)) enclose the ATP-grasp 1 domain. Gln284, Glu298, and Asn300 together coordinate Mg(2+). Mn(2+) contacts are provided by Gln284, Glu298, and Asn300. Positions 402–546 (IGADHLLLEE…YSTYEEENES (145 aa)) are oligomerization domain. The segment at 547–929 (TRSAKESVIV…ALYKGFVASG (383 aa)) is carbamoyl phosphate synthetic domain. The ATP-grasp 2 domain occupies 671–861 (EKALEILQIP…MANVATRVIL (191 aa)). ATP contacts are provided by Arg707, Arg746, Val748, Glu752, Gly777, Val778, His779, Ser780, Gln820, and Glu832. Mg(2+) is bound by residues Gln820, Glu832, and Asn834. Mn(2+) contacts are provided by Gln820, Glu832, and Asn834. One can recognise an MGS-like domain in the interval 930-1070 (TTMHDYGTVL…SEVKQPKARV (141 aa)). The allosteric domain stretch occupies residues 930–1070 (TTMHDYGTVL…SEVKQPKARV (141 aa)).

It belongs to the CarB family. In terms of assembly, composed of two chains; the small (or glutamine) chain promotes the hydrolysis of glutamine to ammonia, which is used by the large (or ammonia) chain to synthesize carbamoyl phosphate. Tetramer of heterodimers (alpha,beta)4. Requires Mg(2+) as cofactor. Mn(2+) serves as cofactor.

The enzyme catalyses hydrogencarbonate + L-glutamine + 2 ATP + H2O = carbamoyl phosphate + L-glutamate + 2 ADP + phosphate + 2 H(+). It carries out the reaction hydrogencarbonate + NH4(+) + 2 ATP = carbamoyl phosphate + 2 ADP + phosphate + 2 H(+). Its pathway is amino-acid biosynthesis; L-arginine biosynthesis; carbamoyl phosphate from bicarbonate: step 1/1. It participates in pyrimidine metabolism; UMP biosynthesis via de novo pathway; (S)-dihydroorotate from bicarbonate: step 1/3. Its function is as follows. Large subunit of the glutamine-dependent carbamoyl phosphate synthetase (CPSase). CPSase catalyzes the formation of carbamoyl phosphate from the ammonia moiety of glutamine, carbonate, and phosphate donated by ATP, constituting the first step of 2 biosynthetic pathways, one leading to arginine and/or urea and the other to pyrimidine nucleotides. The large subunit (synthetase) binds the substrates ammonia (free or transferred from glutamine from the small subunit), hydrogencarbonate and ATP and carries out an ATP-coupled ligase reaction, activating hydrogencarbonate by forming carboxy phosphate which reacts with ammonia to form carbamoyl phosphate. This is Carbamoyl phosphate synthase large chain from Listeria monocytogenes serotype 4a (strain HCC23).